The chain runs to 895 residues: Iron-regulated surface determinant protein H (895 aa).

The first 40 residues, Met-1–Ala-40, serve as a signal peptide directing secretion. The tract at residues Glu-42 to Ala-85 is disordered. The segment covering Asn-53–Gln-62 has biased composition (low complexity). A compositionally biased stretch (polar residues) spans Pro-63–Lys-81. Residues Asp-105–Ser-232 enclose the NEAT 1 domain. The tract at residues Asn-241–Pro-324 is disordered. Residues Gln-243 to Asn-276 are compositionally biased toward low complexity. The segment covering Met-277–Tyr-323 has biased composition (polar residues). 2 consecutive NEAT domains span residues Thr-345–Asp-471 and Gln-543–Asp-660. 3 disordered regions span residues Thr-657–Ile-720, Gln-751–Lys-782, and Lys-841–Thr-868. Composition is skewed to polar residues over residues Ser-663–Gln-677 and Ala-687–Lys-697. 3 stretches are compositionally biased toward basic and acidic residues: residues Asp-698–Ile-720, Gln-751–Asp-765, and Lys-841–Lys-854. Residues Leu-855–Thr-868 are compositionally biased toward polar residues. The LPXTG sorting signal signature appears at Leu-861–Gly-865. Thr-864 is subject to Pentaglycyl murein peptidoglycan amidated threonine. Residues Gly-865–Lys-895 constitute a propeptide, removed by sortase.

The protein belongs to the IsdH family.

Its subcellular location is the secreted. It localises to the cell wall. Functionally, binds human plasma haptoglobin-hemoglobin complexes, haptoglobin and hemoglobin. Binds haptoglobin-hemoglobin complexes with significantly higher affinity than haptoglobin alone. The polypeptide is Iron-regulated surface determinant protein H (isdH) (Staphylococcus aureus (strain NCTC 8325 / PS 47)).